The sequence spans 273 residues: Trypsin-6 (273 aa).

The signal sequence occupies residues 1-22 (MLSKFTAILLAVHIALFACALT). Residues 23-46 (QAEKRHKLTRPAFHPNAPYLAGKR) constitute a propeptide, activation peptide. The Peptidase S1 domain maps to 47–272 (IVGGFVIDIS…VRDWIRETSG (226 aa)). Residues C72 and C88 are joined by a disulfide bond. Active-site charge relay system residues include H87 and D132. 2 cysteine pairs are disulfide-bonded: C197/C213 and C224/C248. S228 functions as the Charge relay system in the catalytic mechanism.

The protein belongs to the peptidase S1 family. As to expression, expressed in the midgut. Expression levels drop a few hours after blood feeding and pick up again 28 hours later.

The protein resides in the secreted. The catalysed reaction is Preferential cleavage: Arg-|-Xaa, Lys-|-Xaa.. In terms of biological role, constitutive trypsin that is expressed 2 days after emergence, coinciding with host seeking behavior of the female. The sequence is that of Trypsin-6 (TRYP6) from Anopheles gambiae (African malaria mosquito).